The following is a 156-amino-acid chain: Enhancer of split M1 protein (156 aa).

A signal peptide spans 1–19 (MMSQTLTLCCLGLVACVYG). 2 Kazal-like domains span residues 23–81 (STND…AWCS) and 96–156 (KLEV…EEKC). 5 cysteine pairs are disulfide-bonded: Cys29–Cys62, Cys33–Cys55, Cys102–Cys135, Cys106–Cys128, and Cys114–Cys156.

The protein is Enhancer of split M1 protein of Drosophila simulans (Fruit fly).